Reading from the N-terminus, the 529-residue chain is Type I inositol polyphosphate 5-phosphatase 5 (529 aa).

Catalytic regions lie at residues D371–T386 and K451–E466.

The protein belongs to the inositol polyphosphate 5-phosphatase family.

Its function is as follows. May be involved in the regulation of root hairs development. Required for restricting both the size of the root-hair initiation site and the width of the root hairs during the transition to tip growth, but is not required for normal subsequent tip growth. The chain is Type I inositol polyphosphate 5-phosphatase 5 from Arabidopsis thaliana (Mouse-ear cress).